A 467-amino-acid chain; its full sequence is Ribulose bisphosphate carboxylase large chain (467 aa).

Residues 1–2 (MS) constitute a propeptide that is removed on maturation. The residue at position 3 (Pro3) is an N-acetylproline. Position 14 is an N6,N6,N6-trimethyllysine (Lys14). Substrate is bound by residues Asn123 and Thr173. The active-site Proton acceptor is the Lys175. Lys177 is a binding site for substrate. The Mg(2+) site is built by Lys201, Asp203, and Glu204. N6-carboxylysine is present on Lys201. Catalysis depends on His294, which acts as the Proton acceptor. Arg295, His327, and Ser379 together coordinate substrate.

It belongs to the RuBisCO large chain family. Type I subfamily. As to quaternary structure, heterohexadecamer of 8 large chains and 8 small chains; disulfide-linked. The disulfide link is formed within the large subunit homodimers. Mg(2+) is required as a cofactor. In terms of processing, the disulfide bond which can form in the large chain dimeric partners within the hexadecamer appears to be associated with oxidative stress and protein turnover.

It is found in the plastid. It localises to the chloroplast. It carries out the reaction 2 (2R)-3-phosphoglycerate + 2 H(+) = D-ribulose 1,5-bisphosphate + CO2 + H2O. It catalyses the reaction D-ribulose 1,5-bisphosphate + O2 = 2-phosphoglycolate + (2R)-3-phosphoglycerate + 2 H(+). Functionally, ruBisCO catalyzes two reactions: the carboxylation of D-ribulose 1,5-bisphosphate, the primary event in carbon dioxide fixation, as well as the oxidative fragmentation of the pentose substrate in the photorespiration process. Both reactions occur simultaneously and in competition at the same active site. The polypeptide is Ribulose bisphosphate carboxylase large chain (Phoenix reclinata (Senegal date palm)).